We begin with the raw amino-acid sequence, 664 residues long: Glycine--tRNA ligase beta subunit (664 aa).

This sequence belongs to the class-II aminoacyl-tRNA synthetase family. As to quaternary structure, tetramer of two alpha and two beta subunits.

It is found in the cytoplasm. The catalysed reaction is tRNA(Gly) + glycine + ATP = glycyl-tRNA(Gly) + AMP + diphosphate. The polypeptide is Glycine--tRNA ligase beta subunit (Rickettsia conorii (strain ATCC VR-613 / Malish 7)).